A 235-amino-acid polypeptide reads, in one-letter code: 7-cyano-7-deazaguanine synthase (235 aa).

16-26 contacts ATP; the sequence is FSGGQDSTTCL. 4 residues coordinate Zn(2+): C195, C204, C207, and C210.

It belongs to the QueC family. Requires Zn(2+) as cofactor.

The enzyme catalyses 7-carboxy-7-deazaguanine + NH4(+) + ATP = 7-cyano-7-deazaguanine + ADP + phosphate + H2O + H(+). It participates in purine metabolism; 7-cyano-7-deazaguanine biosynthesis. In terms of biological role, catalyzes the ATP-dependent conversion of 7-carboxy-7-deazaguanine (CDG) to 7-cyano-7-deazaguanine (preQ(0)). The chain is 7-cyano-7-deazaguanine synthase from Shewanella frigidimarina (strain NCIMB 400).